The primary structure comprises 209 residues: Large ribosomal subunit protein uL3 (209 aa).

Gln150 carries the N5-methylglutamine modification.

The protein belongs to the universal ribosomal protein uL3 family. As to quaternary structure, part of the 50S ribosomal subunit. Forms a cluster with proteins L14 and L19. Post-translationally, methylated by PrmB.

Functionally, one of the primary rRNA binding proteins, it binds directly near the 3'-end of the 23S rRNA, where it nucleates assembly of the 50S subunit. The polypeptide is Large ribosomal subunit protein uL3 (Vibrio vulnificus (strain CMCP6)).